The chain runs to 219 residues: PKHD-type hydroxylase Plav_0037 (219 aa).

Residues 78–172 form the Fe2OG dioxygenase domain; it reads NFIRILLSRY…RRAAVGWIRS (95 aa). Residues His-96, Asp-98, and His-153 each contribute to the Fe cation site. Arg-163 lines the 2-oxoglutarate pocket.

The cofactor is Fe(2+). L-ascorbate serves as cofactor.

This Parvibaculum lavamentivorans (strain DS-1 / DSM 13023 / NCIMB 13966) protein is PKHD-type hydroxylase Plav_0037.